Consider the following 432-residue polypeptide: Homogentisate 1,2-dioxygenase (432 aa).

Residue histidine 286 is the Proton acceptor of the active site. The Fe cation site is built by histidine 329 and glutamate 335. Homogentisate is bound by residues tyrosine 344 and histidine 365. Histidine 365 is a Fe cation binding site.

It belongs to the homogentisate dioxygenase family. As to quaternary structure, hexamer; dimer of trimers. Fe cation serves as cofactor.

The enzyme catalyses homogentisate + O2 = 4-maleylacetoacetate + H(+). The protein operates within amino-acid degradation; L-phenylalanine degradation; acetoacetate and fumarate from L-phenylalanine: step 4/6. Functionally, involved in the catabolism of homogentisate (2,5-dihydroxyphenylacetate or 2,5-OH-PhAc), a central intermediate in the degradation of phenylalanine and tyrosine. Catalyzes the oxidative ring cleavage of the aromatic ring of homogentisate to yield maleylacetoacetate. The chain is Homogentisate 1,2-dioxygenase from Bordetella bronchiseptica (strain ATCC BAA-588 / NCTC 13252 / RB50) (Alcaligenes bronchisepticus).